We begin with the raw amino-acid sequence, 75 residues long: Endogenous retrovirus group K member 10 Np9 protein (75 aa).

Residues 21 to 43 form a disordered region; that stretch reads PTAPKRQRPSRTGHDDDGGFVEK. Over residues 32 to 43 the composition is skewed to basic and acidic residues; it reads TGHDDDGGFVEK.

The protein resides in the nucleus. May possess a function in tumorigenesis. The protein is Endogenous retrovirus group K member 10 Np9 protein (ERVK-10) of Homo sapiens (Human).